The primary structure comprises 527 residues: Phosphoenolpyruvate carboxykinase (ATP) (527 aa).

Substrate contacts are provided by Arg-56, Tyr-192, and Lys-198. ATP-binding positions include Lys-198, His-217, and 233–241; that span reads GLSGTGKTT. Mn(2+)-binding residues include Lys-198 and His-217. Asp-254 lines the Mn(2+) pocket. ATP-binding residues include Glu-282, Arg-319, and Thr-444. Arg-319 contributes to the substrate binding site.

The protein belongs to the phosphoenolpyruvate carboxykinase (ATP) family. Mn(2+) is required as a cofactor.

It localises to the cytoplasm. The catalysed reaction is oxaloacetate + ATP = phosphoenolpyruvate + ADP + CO2. The protein operates within carbohydrate biosynthesis; gluconeogenesis. Its function is as follows. Involved in the gluconeogenesis. Catalyzes the conversion of oxaloacetate (OAA) to phosphoenolpyruvate (PEP) through direct phosphoryl transfer between the nucleoside triphosphate and OAA. The polypeptide is Phosphoenolpyruvate carboxykinase (ATP) (Bacillus subtilis (strain 168)).